A 374-amino-acid chain; its full sequence is Tomoregulin-2 (374 aa).

A signal peptide spans 1–40; the sequence is MVLWESPRQCSSWTLCEGFCWLLLLPVMLLIVARPVKLAA. Over 41–320 the chain is Extracellular; sequence FPTSLSDCQT…VPGPVRFQYV (280 aa). Kazal-like domains lie at 90–137 and 181–229; these read VCQF…SCAT and VCNI…RCQD. Intrachain disulfides connect cysteine 91–cysteine 121, cysteine 95–cysteine 114, cysteine 103–cysteine 135, cysteine 182–cysteine 213, cysteine 186–cysteine 206, and cysteine 195–cysteine 227. Asparagine 204 carries an N-linked (GlcNAc...) (complex) asparagine; atypical glycan. Asparagine 230 carries N-linked (GlcNAc...) asparagine glycosylation. The 41-residue stretch at 261-301 folds into the EGF-like domain; it reads HHIPCPEHYNGFCMHGKCEHSINMQEPSCRCDAGYTGQHCE. Intrachain disulfides connect cysteine 265-cysteine 278, cysteine 273-cysteine 289, and cysteine 291-cysteine 300. A required for shedding region spans residues 303–320; it reads KDYSVLYVVPGPVRFQYV. A helical membrane pass occupies residues 321 to 341; that stretch reads LIAAVIGTIQIAVICVVVLCI. Topologically, residues 342–374 are cytoplasmic; it reads TRKCPRSNRIHRQKQNTGHYSSDNTTRASTRLI. The tract at residues 353-374 is disordered; the sequence is RQKQNTGHYSSDNTTRASTRLI. Polar residues predominate over residues 356 to 374; it reads QNTGHYSSDNTTRASTRLI.

The protein belongs to the tomoregulin family. O-glycosylated; contains chondroitin sulfate glycosaminoglycans. Post-translationally, a soluble form (TMEFF2-ECD) is produced by proteolytic shedding. This shedding can be induced by phorbol ester or pro-inflammatory cytokines such as TNFalpha, and is mediated by ADAM17. As to expression, highly expressed in adult and fetal brain, spinal cord and prostate. Expressed in all brain regions except the pituitary gland, with highest levels in amygdala and corpus callosum. Expressed in the pericryptal myofibroblasts and other stromal cells of normal colonic mucosa. Expressed in prostate carcinoma. Down-regulated in colorectal cancer. Present in Alzheimer disease plaques (at protein level). Isoform 3 is expressed weakly in testis and at high levels in normal and cancerous prostate.

The protein localises to the membrane. The protein resides in the secreted. Its function is as follows. May be a survival factor for hippocampal and mesencephalic neurons. The shedded form up-regulates cancer cell proliferation, probably by promoting ERK1/2 phosphorylation. This Homo sapiens (Human) protein is Tomoregulin-2 (TMEFF2).